The primary structure comprises 189 residues: Elongation factor P (189 aa).

This sequence belongs to the elongation factor P family.

It localises to the cytoplasm. The protein operates within protein biosynthesis; polypeptide chain elongation. In terms of biological role, involved in peptide bond synthesis. Stimulates efficient translation and peptide-bond synthesis on native or reconstituted 70S ribosomes in vitro. Probably functions indirectly by altering the affinity of the ribosome for aminoacyl-tRNA, thus increasing their reactivity as acceptors for peptidyl transferase. This chain is Elongation factor P, found in Pseudomonas putida (strain GB-1).